The sequence spans 133 residues: Large-conductance mechanosensitive channel (133 aa).

The next 2 helical transmembrane spans lie at 14 to 34 and 73 to 93; these read VVDL…VTTL and FITV…MVVV.

It belongs to the MscL family. In terms of assembly, homopentamer.

It is found in the cell membrane. Its function is as follows. Channel that opens in response to stretch forces in the membrane lipid bilayer. May participate in the regulation of osmotic pressure changes within the cell. The chain is Large-conductance mechanosensitive channel from Renibacterium salmoninarum (strain ATCC 33209 / DSM 20767 / JCM 11484 / NBRC 15589 / NCIMB 2235).